A 166-amino-acid chain; its full sequence is Phosphopantetheine adenylyltransferase (166 aa).

Residue serine 10 coordinates substrate. Residues serine 10–phenylalanine 11 and histidine 18 each bind ATP. Positions 42, 79, and 93 each coordinate substrate. Residues glycine 94–arginine 96, glutamate 104, and valine 129–threonine 135 contribute to the ATP site.

Belongs to the bacterial CoaD family. Homohexamer. Mg(2+) serves as cofactor.

It is found in the cytoplasm. The catalysed reaction is (R)-4'-phosphopantetheine + ATP + H(+) = 3'-dephospho-CoA + diphosphate. The protein operates within cofactor biosynthesis; coenzyme A biosynthesis; CoA from (R)-pantothenate: step 4/5. In terms of biological role, reversibly transfers an adenylyl group from ATP to 4'-phosphopantetheine, yielding dephospho-CoA (dPCoA) and pyrophosphate. The protein is Phosphopantetheine adenylyltransferase of Methylobacterium nodulans (strain LMG 21967 / CNCM I-2342 / ORS 2060).